The following is a 306-amino-acid chain: MFPQCKFSREFLHPRYWLTWFGLGVLWLWVQLPYPVLCFLGTRIGAMARPFLKRRESIARKNLELCFPQHSAEEREKMIAENFRSLGMALVETGMAWFWPDSRVRKWFDVEGLDNLKRAQMQNRGVMVVGVHFMSLELGGRVMGLCQPMMATYRPHNNQLMEWVQTRGRMRSNKAMIGRNNLRGIVGALKKGEAVWFAPDQDYGRKGSSFAPFFAVENVATTNGTYVLSRLSGAAMLTVTMVRKADYSGYRLFITPEMEGYPTDENQAAAYMNKIIEKEIMRAPEQYLWIHRRFKTRPVGESSLYI.

The chain crosses the membrane as a helical span at residues 20–40 (WFGLGVLWLWVQLPYPVLCFL). An HXXXXD motif motif is present at residues 132–137 (HFMSLE).

The protein belongs to the LpxL/LpxM/LpxP family. LpxP subfamily.

It is found in the cell inner membrane. It catalyses the reaction (9Z)-hexadecenoyl-[ACP] + alpha-Kdo-(2-&gt;4)-alpha-Kdo-(2-&gt;6)-lipid IVA (E. coli) = (9Z)-hexadecenoyl-(Kdo)2-lipid IVA (E. coli) + holo-[ACP]. It participates in bacterial outer membrane biogenesis; lipopolysaccharide biosynthesis. In terms of biological role, catalyzes the transfer of palmitoleate from palmitoleoyl-[acyl-carrier-protein] (ACP) to Kdo(2)-lipid IV(A) to form Kdo(2)-(palmitoleoyl)-lipid IV(A). Required for the biosynthesis of a distinct molecular species of lipid A, which is present only in cells grown at low temperatures. It may confer a selective advantage to cells growing at lower temperatures by making the outer membrane a more effective barrier to harmful chemicals. In Escherichia coli (strain K12), this protein is Lipid A biosynthesis palmitoleoyltransferase.